Here is a 526-residue protein sequence, read N- to C-terminus: Fusicoccadiene 8-ol C-16-hydroxylase (526 aa).

Residues A34 to L56 form a helical membrane-spanning segment. N309, N418, and N434 each carry an N-linked (GlcNAc...) asparagine glycan. Residue C470 coordinates heme.

This sequence belongs to the cytochrome P450 family. The cofactor is heme.

It is found in the membrane. The protein operates within mycotoxin biosynthesis. In terms of biological role, cytochrome P450 monooxygenase; part of the 2 gene clusters that mediate the biosynthesis of fusicoccins, diterpene glucosides that display phytohormone-like activity and function as potent activators of plasma membrane H(+)-ATPases in plants by modifying 14-3-3 proteins and cause the plant disease constriction canker. The first step in the pathway is performed by the fusicoccadiene synthase PaFS that possesses both prenyl transferase and terpene cyclase activity, converting isopentenyl diphosphate and dimethylallyl diphosphate into geranylgeranyl diphosphate (GGDP) and successively converting GGDP into fusicocca-2,10(14)-diene, a precursor for fusicoccin H. The second step is the oxidation at the C-8 position by the cytochrome P450 monooxygenase PaP450-2 to yield fusicocca-2,10(14)-diene-8-beta-ol. The cytochrome P450 monooxygenase PaP450-1 then catalyzes the hydroxylation at the C-16 position to produce fusicocca-2,10(14)-diene-8-beta,16-diol. The dioxygenase fc-dox then catalyzes the 16-oxydation of fusicocca-2,10(14)-diene-8-beta,16-diol to yield an aldehyde (8-beta-hydroxyfusicocca-1,10(14)-dien-16-al). The short-chain dehydrogenase/reductase fc-sdr catalyzes the reduction of the aldehyde to yield fusicocca-1,10(14)-diene-8-beta,16-diol. The next step is the hydroxylation at C-9 performed by the cytochrome P450 monooxygenase PaP450-3 that leads to fusicoccin H aglycon which is glycosylated to fusicoccin H by the O-glycosyltransferase PaGT. Hydroxylation at C-12 by the cytochrome P450 monooxygenase PaP450-4 leads then to the production of fusicoccin Q and is followed by methylation by the O-methyltransferase PaMT to yield fusicoccin P. Fusicoccin P is further converted to fusicoccin J via prenylation by the O-glucose prenyltransferase PaPT. Cytochrome P450 monooxygenase PaP450-5 then performs hydroxylation at C-19 to yield dideacetyl-fusicoccin A which is acetylated to 3'-O-deacetyl-fusicoccin A by the O-acetyltransferase PaAT-2. Finally, a another acetylation by the O-acetyltransferase PaAT-1 yields fusicoccin A. This is Fusicoccadiene 8-ol C-16-hydroxylase from Phomopsis amygdali (Fusicoccum amygdali).